Consider the following 374-residue polypeptide: Pectate lyase 2 (374 aa).

The first 22 residues, 1–22 (MKYLLPTAAAGLLLLAAQPAMA), serve as a signal peptide directing secretion. Residues Cys-93 and Cys-176 are joined by a disulfide bond. Ca(2+) is bound by residues Asp-150, Asp-152, Glu-187, and Asp-191. Arg-239 is a catalytic residue. A disulfide bridge links Cys-350 with Cys-373.

It belongs to the polysaccharide lyase 1 family. PLADES subfamily. It depends on Ca(2+) as a cofactor.

The protein resides in the secreted. The enzyme catalyses Eliminative cleavage of (1-&gt;4)-alpha-D-galacturonan to give oligosaccharides with 4-deoxy-alpha-D-galact-4-enuronosyl groups at their non-reducing ends.. It functions in the pathway glycan metabolism; pectin degradation; 2-dehydro-3-deoxy-D-gluconate from pectin: step 2/5. Its function is as follows. Involved in maceration and soft-rotting of plant tissue. This chain is Pectate lyase 2 (pel2), found in Pectobacterium carotovorum (Erwinia carotovora).